A 273-amino-acid polypeptide reads, in one-letter code: Large ribosomal subunit protein uL2c (273 aa).

This sequence belongs to the universal ribosomal protein uL2 family. In terms of assembly, part of the 50S ribosomal subunit.

The protein localises to the plastid. Its subcellular location is the apicoplast. This Eimeria tenella (Coccidian parasite) protein is Large ribosomal subunit protein uL2c (rpl2).